Consider the following 256-residue polypeptide: Small ribosomal subunit protein eS1 (256 aa).

Residue A2 is modified to N-acetylalanine; partial.

This sequence belongs to the eukaryotic ribosomal protein eS1 family. In terms of assembly, component of the small ribosomal subunit. Mature ribosomes consist of a small (40S) and a large (60S) subunit. The 40S subunit contains about 33 different proteins and 1 molecule of RNA (18S). The 60S subunit contains about 49 different proteins and 3 molecules of RNA (25S, 5.8S and 5S).

The protein localises to the cytoplasm. This chain is Small ribosomal subunit protein eS1 (rps1), found in Sclerotinia sclerotiorum (strain ATCC 18683 / 1980 / Ss-1) (White mold).